The following is a 557-amino-acid chain: 2-succinyl-5-enolpyruvyl-6-hydroxy-3-cyclohexene-1-carboxylate synthase (557 aa).

The protein belongs to the TPP enzyme family. MenD subfamily. In terms of assembly, homodimer. Mg(2+) serves as cofactor. Requires Mn(2+) as cofactor. Thiamine diphosphate is required as a cofactor.

It catalyses the reaction isochorismate + 2-oxoglutarate + H(+) = 5-enolpyruvoyl-6-hydroxy-2-succinyl-cyclohex-3-ene-1-carboxylate + CO2. Its pathway is quinol/quinone metabolism; 1,4-dihydroxy-2-naphthoate biosynthesis; 1,4-dihydroxy-2-naphthoate from chorismate: step 2/7. It functions in the pathway quinol/quinone metabolism; menaquinone biosynthesis. Its function is as follows. Catalyzes the thiamine diphosphate-dependent decarboxylation of 2-oxoglutarate and the subsequent addition of the resulting succinic semialdehyde-thiamine pyrophosphate anion to isochorismate to yield 2-succinyl-5-enolpyruvyl-6-hydroxy-3-cyclohexene-1-carboxylate (SEPHCHC). This Staphylococcus aureus (strain Mu3 / ATCC 700698) protein is 2-succinyl-5-enolpyruvyl-6-hydroxy-3-cyclohexene-1-carboxylate synthase.